A 526-amino-acid chain; its full sequence is MWILIYLFIIWSSLRTWVTAVDSTTTVGDDLNETVSASVWPTMSPQMTVAFRSQRDVMGNLTIDQLPYVGLNLRRVLLNNETSMVNEGNNTRLLTLFKSMLSSEANAFVLDLEQYNNDLRVVDTTLLFSDVLIALESFIFSTQNNLYANIIVLLLNISAPELDSTEYRHQNQTLNTTYILDKNLGNSFIYKPTDLQSDRAKNNTWNIYGKSSIDGWPTLGSVLYEQKKRLVIGELTDFFNETTAPYIFPHDVFHYEQGNSTLDCPSTVEGLTDLSSIHWRFLDSLFNSVDIKEYISCGLSPIISNSAYVNNVTQLADIIHEGSVWSWDSDQPSVTQSTSKSGSSSGTLEAYNCVLLYYFANNETVTWRVGNCYNSNIGLCRYENMAFRWLVRSNKATYFDFDSYQGSKCPDQYSFNIPRSPLEQRSFIAYMRNSSFSDTQIWIDLNSISVSNCWVSGGPYASCPYEKVISRRNFVTMMVPASVCSFALLCIVVYLSVLRVPIYDNRKNWRRVINKISKSELEGVPS.

Residues 1 to 20 form the signal peptide; that stretch reads MWILIYLFIIWSSLRTWVTA. At 21 to 477 the chain is on the extracellular side; sequence VDSTTTVGDD…VISRRNFVTM (457 aa). 13 N-linked (GlcNAc...) asparagine glycosylation sites follow: N32, N60, N80, N89, N156, N171, N175, N202, N240, N259, N311, N362, and N433. A helical membrane pass occupies residues 478–498; that stretch reads MVPASVCSFALLCIVVYLSVL. Residues 499-526 are Cytoplasmic-facing; the sequence is RVPIYDNRKNWRRVINKISKSELEGVPS.

It belongs to the MTC6 family.

Its subcellular location is the membrane. Its function is as follows. May be involved in telomere capping. This is Maintenance of telomere capping protein 6 (MTC6) from Saccharomyces cerevisiae (strain AWRI1631) (Baker's yeast).